The chain runs to 267 residues: Hydroxyethylthiazole kinase 2 (267 aa).

M41 is a substrate binding site. Residues K116 and T166 each contribute to the ATP site. Residue G193 coordinates substrate.

The protein belongs to the Thz kinase family. Mg(2+) serves as cofactor.

The enzyme catalyses 5-(2-hydroxyethyl)-4-methylthiazole + ATP = 4-methyl-5-(2-phosphooxyethyl)-thiazole + ADP + H(+). Its pathway is cofactor biosynthesis; thiamine diphosphate biosynthesis; 4-methyl-5-(2-phosphoethyl)-thiazole from 5-(2-hydroxyethyl)-4-methylthiazole: step 1/1. Functionally, catalyzes the phosphorylation of the hydroxyl group of 4-methyl-5-beta-hydroxyethylthiazole (THZ). The polypeptide is Hydroxyethylthiazole kinase 2 (Streptococcus pneumoniae (strain Taiwan19F-14)).